The sequence spans 194 residues: Endonuclease V (194 aa).

2 residues coordinate Mg(2+): D31 and E95.

The protein belongs to the endonuclease V family. Requires Mg(2+) as cofactor.

The protein localises to the cytoplasm. It carries out the reaction Endonucleolytic cleavage at apurinic or apyrimidinic sites to products with a 5'-phosphate.. Functionally, DNA repair enzyme involved in the repair of deaminated bases. Selectively cleaves double-stranded DNA at the second phosphodiester bond 3' to a deoxyinosine leaving behind the intact lesion on the nicked DNA. This Pyrococcus abyssi (strain GE5 / Orsay) protein is Endonuclease V.